The following is a 736-amino-acid chain: Cytosolic neutral trehalase (736 aa).

Residues 1–47 are disordered; sequence MSEAPQARRVGSVDDHSVYDDAKTYYTSEERHNNSRSGPRQRTYSQN. Positions 11 to 33 are enriched in basic and acidic residues; it reads GSVDDHSVYDDAKTYYTSEERHN. Polar residues predominate over residues 35–47; it reads SRSGPRQRTYSQN. Residues Asp-92, Asp-94, Asn-96, Gln-98, and Asp-103 each coordinate Ca(2+). Residues Arg-279, 286–287, Asn-323, 332–334, Glu-399, Arg-448, and Gly-451 contribute to the substrate site; these read WD and RSQ. Residues Asp-453 and Glu-657 each act as proton donor/acceptor in the active site.

This sequence belongs to the glycosyl hydrolase 37 family. Ca(2+) is required as a cofactor.

The protein localises to the cytoplasm. The enzyme catalyses alpha,alpha-trehalose + H2O = alpha-D-glucose + beta-D-glucose. The protein operates within carbohydrate degradation. Hydrolyzes intracellular trehalose to glucose. Plays a role in pathogenicity, specifically in proliferation of invasive hyphae in rice blast disease. In Pyricularia oryzae (strain 70-15 / ATCC MYA-4617 / FGSC 8958) (Rice blast fungus), this protein is Cytosolic neutral trehalase (NTH1).